A 371-amino-acid chain; its full sequence is Histidinol-phosphate aminotransferase (371 aa).

K222 carries the post-translational modification N6-(pyridoxal phosphate)lysine.

The protein belongs to the class-II pyridoxal-phosphate-dependent aminotransferase family. Histidinol-phosphate aminotransferase subfamily. Homodimer. It depends on pyridoxal 5'-phosphate as a cofactor.

The catalysed reaction is L-histidinol phosphate + 2-oxoglutarate = 3-(imidazol-4-yl)-2-oxopropyl phosphate + L-glutamate. Its pathway is amino-acid biosynthesis; L-histidine biosynthesis; L-histidine from 5-phospho-alpha-D-ribose 1-diphosphate: step 7/9. This is Histidinol-phosphate aminotransferase from Anoxybacillus flavithermus (strain DSM 21510 / WK1).